Here is a 340-residue protein sequence, read N- to C-terminus: Biotin synthase (340 aa).

In terms of domain architecture, Radical SAM core spans 53 to 280; the sequence is SAIQLSSLLS…LARVRLSAGR (228 aa). Residues Cys-68, Cys-72, and Cys-75 each coordinate [4Fe-4S] cluster. 4 residues coordinate [2Fe-2S] cluster: Cys-112, Cys-143, Cys-203, and Arg-275.

Belongs to the radical SAM superfamily. Biotin synthase family. Homodimer. [4Fe-4S] cluster is required as a cofactor. [2Fe-2S] cluster serves as cofactor.

It carries out the reaction (4R,5S)-dethiobiotin + (sulfur carrier)-SH + 2 reduced [2Fe-2S]-[ferredoxin] + 2 S-adenosyl-L-methionine = (sulfur carrier)-H + biotin + 2 5'-deoxyadenosine + 2 L-methionine + 2 oxidized [2Fe-2S]-[ferredoxin]. It participates in cofactor biosynthesis; biotin biosynthesis; biotin from 7,8-diaminononanoate: step 2/2. Catalyzes the conversion of dethiobiotin (DTB) to biotin by the insertion of a sulfur atom into dethiobiotin via a radical-based mechanism. The chain is Biotin synthase from Bordetella petrii (strain ATCC BAA-461 / DSM 12804 / CCUG 43448).